The primary structure comprises 426 residues: UPF0597 protein CLB_1750 (426 aa).

This sequence belongs to the UPF0597 family.

The protein is UPF0597 protein CLB_1750 of Clostridium botulinum (strain ATCC 19397 / Type A).